The primary structure comprises 96 residues: MKKRGGRTLWLVYIDLSVPRSRGRILPRSQAVNKPTLQEMVKALEALGYKYEVYPNKKYPPLWYDDRAQGYVVVKTDEKMRIIAAKVAEKIKQIRG.

The protein belongs to the SRP19 family. As to quaternary structure, part of the signal recognition particle protein translocation system, which is composed of SRP and FtsY. Archaeal SRP consists of a 7S RNA molecule of 300 nucleotides and two protein subunits: SRP54 and SRP19.

It localises to the cytoplasm. Functionally, involved in targeting and insertion of nascent membrane proteins into the cytoplasmic membrane. Binds directly to 7S RNA and mediates binding of the 54 kDa subunit of the SRP. This chain is Signal recognition particle 19 kDa protein, found in Pyrobaculum arsenaticum (strain DSM 13514 / JCM 11321 / PZ6).